Reading from the N-terminus, the 459-residue chain is Cysteine--tRNA ligase (459 aa).

Cys-28 is a Zn(2+) binding site. Residues 30–40 carry the 'HIGH' region motif; that stretch reads VTVYDLCHIGH. Zn(2+) contacts are provided by Cys-209, His-234, and Glu-238. The short motif at 266-270 is the 'KMSKS' region element; that stretch reads KMSKS. Position 269 (Lys-269) interacts with ATP.

This sequence belongs to the class-I aminoacyl-tRNA synthetase family. As to quaternary structure, monomer. It depends on Zn(2+) as a cofactor.

It is found in the cytoplasm. The enzyme catalyses tRNA(Cys) + L-cysteine + ATP = L-cysteinyl-tRNA(Cys) + AMP + diphosphate. The sequence is that of Cysteine--tRNA ligase from Haemophilus influenzae (strain PittGG).